The primary structure comprises 100 residues: Urease subunit gamma (100 aa).

It belongs to the urease gamma subunit family. In terms of assembly, heterotrimer of UreA (gamma), UreB (beta) and UreC (alpha) subunits. Three heterotrimers associate to form the active enzyme.

It localises to the cytoplasm. The enzyme catalyses urea + 2 H2O + H(+) = hydrogencarbonate + 2 NH4(+). The protein operates within nitrogen metabolism; urea degradation; CO(2) and NH(3) from urea (urease route): step 1/1. This is Urease subunit gamma from Pseudomonas putida (strain W619).